The primary structure comprises 489 residues: Serine/arginine-rich splicing factor 4 (489 aa).

The RRM 1 domain occupies 2–72; sequence PRVYIGRLSY…ERVIVEHARG (71 aa). Disordered stretches follow at residues 72-95 and 169-489; these read GPRR…GRDK and KIRL…HSRS. 2 positions are modified to phosphoserine: Ser78 and Ser84. An RRM 2 domain is found at 104–177; it reads YRLIVENLSS…RKIRLVEDKP (74 aa). 2 stretches are compositionally biased toward basic residues: residues 179-206 and 214-246; these read SRRR…KSRS and SHSK…KKEK. Basic and acidic residues predominate over residues 247 to 279; it reads SRSPSKDNKSRSRSRSPDKSRSKSKDHAEDKLQ. Residues Ser289, Ser291, and Ser293 each carry the phosphoserine modification. Residues 293–332 are compositionally biased toward basic and acidic residues; sequence SRHDSKSRSRSQERRAEEERRRSVSRARSQEKSRSQEKSL. Basic residues predominate over residues 333–356; sequence LKSRSRSRSRSRSRSKDKRKGRKR. Composition is skewed to basic and acidic residues over residues 357–370 and 394–426; these read SRDE…SKSE and KDTD…RAEG. Phosphoserine occurs at positions 441, 453, and 455. 2 stretches are compositionally biased toward basic residues: residues 456–469 and 479–489; these read RSKS…RSKS and SRSRSRSHSRS.

The protein belongs to the splicing factor SR family. As to quaternary structure, found in a pre-mRNA splicing complex with SRSF4/SFRS4, SRSF5/SFRS5, SNRNP70, SNRPA1, SRRM1 and SRRM2. Interacts with PNN. Post-translationally, extensively phosphorylated on serine residues in the RS domain.

It is found in the nucleus speckle. Functionally, plays a role in alternative splice site selection during pre-mRNA splicing. Represses the splicing of MAPT/Tau exon 10. This is Serine/arginine-rich splicing factor 4 (Srsf4) from Mus musculus (Mouse).